We begin with the raw amino-acid sequence, 83 residues long: Cytotoxin homolog 5V (83 aa).

The N-terminal stretch at 1-21 (MKTLLLTLVVVTIVCLDLGYT) is a signal peptide. Cystine bridges form between Cys-24–Cys-43, Cys-36–Cys-61, Cys-65–Cys-76, and Cys-77–Cys-82.

Belongs to the three-finger toxin family. Short-chain subfamily. Orphan group XV sub-subfamily. In terms of tissue distribution, expressed by the venom gland.

It localises to the secreted. It is found in the target cell membrane. In terms of biological role, has low cytotoxic activity. The protein is Cytotoxin homolog 5V of Naja atra (Chinese cobra).